The sequence spans 595 residues: Leiomodin-1 (595 aa).

Disordered regions lie at residues 1–322 and 467–568; these read MSKV…KVKN and DKQR…QEKN. Residue Ser12 is modified to Phosphoserine. A compositionally biased stretch (acidic residues) spans 27-40; it reads EEMEELEKELDVVD. Composition is skewed to basic and acidic residues over residues 72–105, 117–127, 134–193, 201–224, 232–251, 259–289, 467–476, and 484–493; these read CEKESKKIIQREMSVDESKQVGRKTDAKNGEDKG, QDSDVGKEPKK, FSRD…EKTG, SRDKDKKREEVKEPSKKEEVKLTA, RQEDGKQKESREDRDKKPEV, RDSRKEDEKVKKEETQPDKGVREEGKTREKQ, DKQRQKRLQE, and SGEKKDRLEV. Position 85 is a phosphoserine (Ser85). Phosphoserine is present on Ser135. A run of 8 repeats spans residues 165–180, 181–196, 197–212, 213–227, 228–243, 244–257, 258–273, and 274–288. Residues 165-288 are 8 X approximate tandem repeats; the sequence is AAVDRKEAGK…VREEGKTREK (124 aa). Composition is skewed to pro residues over residues 503 to 513 and 527 to 538; these read SPKPSPQPSPK and AAPPPPPPPLAP. A 5 X 4 AA approximate tandem repeats region spans residues 503 to 522; the sequence is SPKPSPQPSPKSAPKNSPKK. A Phosphoserine modification is found at Ser550. The WH2 domain occupies 569–588; that stretch reads SRDQLLAAIRSSNLKQLKKV.

In terms of tissue distribution, detected in smooth muscle, in stomach and uterus, blood vessel wall, and in slow fibers in extraocular muscle, urinary bladder and sternothyroid muscle (at protein level).

The protein localises to the cytoplasm. It is found in the myofibril. Its subcellular location is the sarcomere. The protein resides in the cytoskeleton. Required for proper contractility of visceral smooth muscle cells. Mediates nucleation of actin filaments. The sequence is that of Leiomodin-1 from Rattus norvegicus (Rat).